The sequence spans 451 residues: Protein naked cuticle homolog 2 (451 aa).

The disordered stretch occupies residues 1 to 108 (MGKLQSKHAA…PRGPGGQRLN (108 aa)). Gly-2 is lipidated: N-myristoyl glycine. The interval 2–173 (GKLQSKHAAA…GSSKTLRVKL (172 aa)) is targeting to the basolateral cell membrane. Composition is skewed to basic and acidic residues over residues 34 to 63 (KGAEEAERRARDKQELPNGDPKEGPFREDQ) and 89 to 99 (DGERAANREGP). An interaction with DVL1, DVL2 and DVL3 region spans residues 113–178 (QCDVSVEEDD…LRVKLTVSPE (66 aa)). Residues 119–154 (EEDDRQEWTFTLYDFDNCGKVTREDMSSLMHTIYEV) enclose the EF-hand domain. Ca(2+) contacts are provided by Asp-132, Asp-134, Lys-138, and Asp-143. Disordered stretches follow at residues 162–237 (SSGS…PYCV) and 256–408 (YTSR…TVEH). Over residues 180-215 (SSKRKEGPPAGQDREPTRCRMEGELAEEPRVADRRL) the composition is skewed to basic and acidic residues. The interaction with TGFA stretch occupies residues 300-385 (QVLVEHVVPA…PPPPYGHKRY (86 aa)). Residues 332–351 (KSPKGSGKPPGVPASSKSGK) are compositionally biased toward low complexity.

This sequence belongs to the NKD family. As to quaternary structure, interacts with DVL1, DVL2, DVL3 and PPP2R3A. Interacts with RNF25 and TGFA (via cytoplasmic domain). In terms of processing, ubiquitinated, leading to rapid proteasomal degradation. Interaction with TGFA interferes with RNF25 binding and protects against ubiquitination mediated by RNF25. In terms of tissue distribution, expressed in kidney, lung, pancreas and spleen.

It is found in the cell membrane. The protein resides in the cytoplasm. The protein localises to the cytoplasmic vesicle. Its function is as follows. Cell autonomous antagonist of the canonical Wnt signaling pathway. May activate a second Wnt signaling pathway that controls planar cell polarity. Required for processing of TGFA and for targeting of TGFA to the basolateral membrane of polarized epithelial cells. This is Protein naked cuticle homolog 2 (NKD2) from Homo sapiens (Human).